Here is a 239-residue protein sequence, read N- to C-terminus: Glucosamine-6-phosphate deaminase (239 aa).

Aspartate 62 acts as the Proton acceptor; for enolization step in catalysis. The For ring-opening step role is filled by asparagine 128. Residue histidine 130 is the Proton acceptor; for ring-opening step of the active site. Glutamate 135 functions as the For ring-opening step in the catalytic mechanism.

This sequence belongs to the glucosamine/galactosamine-6-phosphate isomerase family. NagB subfamily.

It catalyses the reaction alpha-D-glucosamine 6-phosphate + H2O = beta-D-fructose 6-phosphate + NH4(+). It functions in the pathway amino-sugar metabolism; N-acetylneuraminate degradation; D-fructose 6-phosphate from N-acetylneuraminate: step 5/5. Functionally, catalyzes the reversible isomerization-deamination of glucosamine 6-phosphate (GlcN6P) to form fructose 6-phosphate (Fru6P) and ammonium ion. This Lactobacillus acidophilus (strain ATCC 700396 / NCK56 / N2 / NCFM) protein is Glucosamine-6-phosphate deaminase.